Consider the following 325-residue polypeptide: Putative S-adenosyl-L-methionine-dependent methyltransferase MT0917 (325 aa).

S-adenosyl-L-methionine contacts are provided by residues aspartate 126 and 155-156; that span reads DL.

Belongs to the UPF0677 family.

Its function is as follows. Exhibits S-adenosyl-L-methionine-dependent methyltransferase activity. This chain is Putative S-adenosyl-L-methionine-dependent methyltransferase MT0917, found in Mycobacterium tuberculosis (strain CDC 1551 / Oshkosh).